The primary structure comprises 502 residues: Probable glycine dehydrogenase (decarboxylating) subunit 2 (502 aa).

The residue at position 273 (Lys273) is an N6-(pyridoxal phosphate)lysine.

Belongs to the GcvP family. C-terminal subunit subfamily. As to quaternary structure, the glycine cleavage system is composed of four proteins: P, T, L and H. In this organism, the P 'protein' is a heterodimer of two subunits. Pyridoxal 5'-phosphate serves as cofactor.

The enzyme catalyses N(6)-[(R)-lipoyl]-L-lysyl-[glycine-cleavage complex H protein] + glycine + H(+) = N(6)-[(R)-S(8)-aminomethyldihydrolipoyl]-L-lysyl-[glycine-cleavage complex H protein] + CO2. In terms of biological role, the glycine cleavage system catalyzes the degradation of glycine. The P protein binds the alpha-amino group of glycine through its pyridoxal phosphate cofactor; CO(2) is released and the remaining methylamine moiety is then transferred to the lipoamide cofactor of the H protein. The protein is Probable glycine dehydrogenase (decarboxylating) subunit 2 of Staphylococcus epidermidis (strain ATCC 35984 / DSM 28319 / BCRC 17069 / CCUG 31568 / BM 3577 / RP62A).